The following is a 372-amino-acid chain: Glutamate 5-kinase (372 aa).

Position 14 (K14) interacts with ATP. Positions 54, 141, and 153 each coordinate substrate. 173-174 (TD) is an ATP binding site. The PUA domain occupies 280-358 (RGTLVLDAGA…EAIESILGYS (79 aa)).

This sequence belongs to the glutamate 5-kinase family.

The protein localises to the cytoplasm. The catalysed reaction is L-glutamate + ATP = L-glutamyl 5-phosphate + ADP. The protein operates within amino-acid biosynthesis; L-proline biosynthesis; L-glutamate 5-semialdehyde from L-glutamate: step 1/2. Functionally, catalyzes the transfer of a phosphate group to glutamate to form L-glutamate 5-phosphate. This chain is Glutamate 5-kinase, found in Pseudomonas putida (strain ATCC 700007 / DSM 6899 / JCM 31910 / BCRC 17059 / LMG 24140 / F1).